Here is a 633-residue protein sequence, read N- to C-terminus: Lysophospholipase 1 (633 aa).

The N-terminal stretch at 1–20 (MKTTTVACAVAGLLFSCVSG) is a signal peptide. In terms of domain architecture, PLA2c spans 47–594 (GCPASRPTIR…QRYCWDGSLN (548 aa)). N-linked (GlcNAc...) asparagine glycosylation is found at Asn64, Asn104, Asn139, Asn173, Asn246, Asn290, Asn329, Asn358, Asn397, Asn450, Asn463, Asn469, Asn497, Asn500, Asn521, Asn549, Asn555, and Asn594. The GPI-like-anchor amidated serine moiety is linked to residue Ser609. A propeptide spans 610-633 (AASGIIPSISTVAMAVVFAAWTIF) (removed in mature form).

It belongs to the lysophospholipase family. In terms of processing, the GPI-like anchor contains a phosphoceramide lipid group. The anchor position has not been determined.

The protein localises to the cell membrane. It catalyses the reaction a 1-acyl-sn-glycero-3-phosphocholine + H2O = sn-glycerol 3-phosphocholine + a fatty acid + H(+). In terms of biological role, catalyzes the release of fatty acids from lysophospholipids. In Aspergillus fumigatus (strain CBS 144.89 / FGSC A1163 / CEA10) (Neosartorya fumigata), this protein is Lysophospholipase 1 (plb1).